The chain runs to 71 residues: UPF0352 protein Asuc_0778 (71 aa).

It belongs to the UPF0352 family.

This Actinobacillus succinogenes (strain ATCC 55618 / DSM 22257 / CCUG 43843 / 130Z) protein is UPF0352 protein Asuc_0778.